A 306-amino-acid chain; its full sequence is MIKQRTLQQAISTTGVGLHKGNKVNLTLRPAPANTGLIFRRVDLDPVVDIPARADWVRDTQLCTCLINEENVRVSTVEHLLAALAGVGIDNAIIEVDSHEIPIMDGSSHPFVYLLQSAGIEEQSAAKKFIRIKQPVRVEDGDKWAELLPHDGFRIDFAIDFEHPAIADTGQTVSIDFSANAFIKEISRARTFGFMKDIEYLRENNLALGGSFDNAVVLDEFRILNSDGLRYDDEFVKHKMLDAIGDLYMGGHSILGHLRAYKSGHALNNQLLQALLAQQSAWEFVTFDEEQATAPIAFWSPATTTA.

Zn(2+) contacts are provided by His-79, His-238, and Asp-242. The active-site Proton donor is His-265.

It belongs to the LpxC family. The cofactor is Zn(2+).

It carries out the reaction a UDP-3-O-[(3R)-3-hydroxyacyl]-N-acetyl-alpha-D-glucosamine + H2O = a UDP-3-O-[(3R)-3-hydroxyacyl]-alpha-D-glucosamine + acetate. It functions in the pathway glycolipid biosynthesis; lipid IV(A) biosynthesis; lipid IV(A) from (3R)-3-hydroxytetradecanoyl-[acyl-carrier-protein] and UDP-N-acetyl-alpha-D-glucosamine: step 2/6. Its function is as follows. Catalyzes the hydrolysis of UDP-3-O-myristoyl-N-acetylglucosamine to form UDP-3-O-myristoylglucosamine and acetate, the committed step in lipid A biosynthesis. This chain is UDP-3-O-acyl-N-acetylglucosamine deacetylase, found in Idiomarina loihiensis (strain ATCC BAA-735 / DSM 15497 / L2-TR).